A 621-amino-acid polypeptide reads, in one-letter code: TOX high mobility group box family member 4 (621 aa).

2 disordered regions span residues 153-227 and 305-333; these read LGLS…QKPV and LDPA…ASIE. Residue threonine 176 is modified to Phosphothreonine. Residues serine 178, serine 181, and serine 182 each carry the phosphoserine modification. Basic and acidic residues predominate over residues 183 to 193; that stretch reads LHEDGVEDFRR. The span at 208-218 shows a compositional bias: basic residues; the sequence is KQKAPKKRKKK. The Nuclear localization signal motif lies at 213–218; the sequence is KKRKKK. Positions 223-291 form a DNA-binding region, HMG box; the sequence is PQKPVSAYAL…EYLKALAAYK (69 aa). Pro residues predominate over residues 307–319; the sequence is PAPPSQTPSPPPM. Threonine 313 carries the post-translational modification Phosphothreonine. The residue at position 315 (serine 315) is a Phosphoserine. Low complexity predominate over residues 320–333; sequence ATVDPASPAPASIE. Position 481 is an asymmetric dimethylarginine (arginine 481). The interval 510–529 is disordered; it reads PTVESSPERPMNNSPEAHTV. Phosphoserine is present on residues serine 533, serine 550, serine 552, serine 560, serine 562, and serine 567.

In terms of assembly, component of the PNUTS-PP1 phosphatase complex, composed of PPP1R10/PNUTS, TOX4, WDR82 and PPP1CA or PPP1CB or PPP1CC. Interacts with PPP1R10/PNUTS. Interacts with FOXO1 and CREB1 (increased by cAMP); FOXO1 and CREB1 are required for full induction of TOX4-dependent activity and the interactions are inhibited by insulin.

The protein localises to the nucleus. Its subcellular location is the chromosome. Its activity is regulated as follows. In liver, recruited to target gene promoters following treatment with dexamethasone and cAMP. Binding is decreased in presence of insulin. Transcription factor that modulates cell fate reprogramming from the somatic state to the pluripotent and neuronal fate. In liver, controls the expression of hormone-regulated gluconeogenic genes such as G6PC1 and PCK1. This regulation is independent of the insulin receptor activation. Also acts as a regulatory component of protein phosphatase 1 (PP1) complexes. Component of the PNUTS-PP1 protein phosphatase complex, a PP1 complex that regulates RNA polymerase II transcription pause-release. PNUTS-PP1 also plays a role in the control of chromatin structure and cell cycle progression during the transition from mitosis into interphase. This chain is TOX high mobility group box family member 4 (TOX4), found in Pongo abelii (Sumatran orangutan).